Consider the following 613-residue polypeptide: Epsin-2 (613 aa).

The 133-residue stretch at 11-143 folds into the ENTH domain; it reads NMMKGYSSTQ…NDEERLREER (133 aa). Disordered stretches follow at residues 140-208, 323-351, and 356-375; these read REER…DDED, TAANMQQQQQQPADFQQPLPTGSNNPFSM, and RQKQEQQHAQLQRQQEEARQ. Over residues 148-167 the composition is skewed to basic residues; sequence RNRRANRAARPRPRRQRTRS. Threonine 165 bears the Phosphothreonine mark. Serine 167 carries the phosphoserine modification. UIM domains follow at residues 175–194 and 206–225; these read SYQDDLEKALEESRITAQED and DEDPDFQAALQLSKEEEELK. Residues 179–188 are compositionally biased toward basic and acidic residues; the sequence is DLEKALEESR. Positions 323 to 339 are enriched in low complexity; sequence TAANMQQQQQQPADFQQ. Polar residues predominate over residues 340 to 350; it reads PLPTGSNNPFS. Lysine 426 participates in a covalent cross-link: Glycyl lysine isopeptide (Lys-Gly) (interchain with G-Cter in ubiquitin). Threonine 430 is modified (phosphothreonine). Serine 434 bears the Phosphoserine mark. 3 positions are modified to phosphothreonine: threonine 450, threonine 468, and threonine 470. The span at 471-512 shows a compositional bias: polar residues; sequence GTFINSQGTGYKQVTNEPKNNPFLSNQYTGLPSTNIVPTQTG. The disordered stretch occupies residues 471 to 613; the sequence is GTFINSQGTG…PDQGVSLIDL (143 aa). A compositionally biased stretch (low complexity) spans 526-600; it reads SPQQNPTGIS…QQQQQQQQQQ (75 aa).

The protein belongs to the epsin family. In terms of processing, phosphorylated by PRK1.

The protein localises to the cytoplasm. It is found in the membrane. Functionally, binds to membranes enriched in phosphatidylinositol 3,5-bisphosphate (PtdIns(3,5)P2) and phosphatidylinositol 4,5-bisphosphate (PtdIns(4,5)P2). Required for endocytosis and localization of actin. The sequence is that of Epsin-2 (ENT2) from Saccharomyces cerevisiae (strain ATCC 204508 / S288c) (Baker's yeast).